The following is a 955-amino-acid chain: Glycine dehydrogenase (decarboxylating) (955 aa).

Position 702 is an N6-(pyridoxal phosphate)lysine (Lys702).

This sequence belongs to the GcvP family. In terms of assembly, the glycine cleavage system is composed of four proteins: P, T, L and H. Pyridoxal 5'-phosphate is required as a cofactor.

It carries out the reaction N(6)-[(R)-lipoyl]-L-lysyl-[glycine-cleavage complex H protein] + glycine + H(+) = N(6)-[(R)-S(8)-aminomethyldihydrolipoyl]-L-lysyl-[glycine-cleavage complex H protein] + CO2. Functionally, the glycine cleavage system catalyzes the degradation of glycine. The P protein binds the alpha-amino group of glycine through its pyridoxal phosphate cofactor; CO(2) is released and the remaining methylamine moiety is then transferred to the lipoamide cofactor of the H protein. The sequence is that of Glycine dehydrogenase (decarboxylating) from Stenotrophomonas maltophilia (strain K279a).